Consider the following 402-residue polypeptide: Putative cytochrome P450 133B1 (402 aa).

Cysteine 348 lines the heme pocket.

It belongs to the cytochrome P450 family. Heme is required as a cofactor.

The chain is Putative cytochrome P450 133B1 (cyp133B1) from Xylella fastidiosa (strain 9a5c).